A 512-amino-acid chain; its full sequence is Rab11 family-interacting protein 2 (512 aa).

The C2 domain maps to 1-120 (MMLSEQAQKW…DKQRRKTEWF (120 aa)). Residues 15-102 (VQVTVLQAKD…GLDKFLGQVA (88 aa)) are necessary for its cellular translocation to the plasma membrane. Disordered regions lie at residues 169 to 239 (DKMK…MSSE) and 262 to 285 (VPESGSLKSPHRRTLSFDTSKMNQ). The segment covering 178–188 (GTFSDTSSAII) has biased composition (polar residues). The span at 226–236 (HSMSDLSGSHM) shows a compositional bias: low complexity. At S227 the chain carries Phosphoserine; by MARK2. The residue at position 277 (S277) is a Phosphoserine. An NPF 1 motif is present at residues 323 to 325 (NPF). The segment covering 361 to 374 (ERVTGKKDSRRSDK) has biased composition (basic and acidic residues). The segment at 361–392 (ERVTGKKDSRRSDKLNNGGSDSPCDLKSPNAF) is disordered. 2 consecutive short sequence motifs (NPF) follow at residues 406 to 408 (NPF) and 440 to 442 (NPF). The FIP-RBD domain occupies 437 to 499 (PDSNPFDATA…EETPSILRVP (63 aa)). The tract at residues 465–512 (ELLRRKDTHIRELEDYIDNLLVRVMEETPSILRVPYEPSRKAGKFSNS) is necessary for interaction with AP2A1, RAB11A, subcellular location, endocytosis activity and homooligomerization.

As to quaternary structure, homooligomerizes in a Rab11-independent manner. Forms a heterooligomeric complex with RAB11FIP4. Interacts with AP2A1, MYO5B, RAB25 and REPS1. Interacts with RAB11A and RAB11B (activated GTP-bound form). Interacts with NPC1L1. Interacts (via NPF motifs) with EHD1 and EHD3. Interacts with TICAM2; this interaction directs RAB11FIP2 to the phagosome. Interacts with RAB14 and RAB25 (GTP-bound forms). Post-translationally, phosphorylation at Ser-227 by MARK2 regulates epithelial cell polarity.

The protein localises to the cell projection. It localises to the phagocytic cup. Its subcellular location is the cell membrane. The protein resides in the recycling endosome membrane. Functionally, a Rab11 effector binding preferentially phosphatidylinositol 3,4,5-trisphosphate (PtdInsP3) and phosphatidic acid (PA) and acting in the regulation of the transport of vesicles from the endosomal recycling compartment (ERC) to the plasma membrane. Involved in insulin granule exocytosis. Also involved in receptor-mediated endocytosis and membrane trafficking of recycling endosomes, probably originating from clathrin-coated vesicles. Required in a complex with MYO5B and RAB11 for the transport of NPC1L1 to the plasma membrane. Also acts as a regulator of cell polarity. Plays an essential role in phagocytosis through a mechanism involving TICAM2, RAC1 and CDC42 Rho GTPases for controlling actin-dynamics. The chain is Rab11 family-interacting protein 2 (RAB11FIP2) from Homo sapiens (Human).